A 440-amino-acid polypeptide reads, in one-letter code: F-box protein pof12 (440 aa).

The F-box domain occupies 8-54 (KNPASIFSHETLLHVLNDLSAHDLAALERVSRSWNSIVRRSSVWHNL).

Interacts with skp1.

Its subcellular location is the nucleus. The protein is F-box protein pof12 (pof12) of Schizosaccharomyces pombe (strain 972 / ATCC 24843) (Fission yeast).